A 125-amino-acid chain; its full sequence is Small ribosomal subunit protein uS13 (125 aa).

The segment at 95–125 (GLPLRGQRTKTNARTRKGKRKTVANKKIASK) is disordered.

It belongs to the universal ribosomal protein uS13 family. In terms of assembly, part of the 30S ribosomal subunit. Forms a loose heterodimer with protein S19. Forms two bridges to the 50S subunit in the 70S ribosome.

Functionally, located at the top of the head of the 30S subunit, it contacts several helices of the 16S rRNA. In the 70S ribosome it contacts the 23S rRNA (bridge B1a) and protein L5 of the 50S subunit (bridge B1b), connecting the 2 subunits; these bridges are implicated in subunit movement. Contacts the tRNAs in the A and P-sites. This Borrelia garinii subsp. bavariensis (strain ATCC BAA-2496 / DSM 23469 / PBi) (Borreliella bavariensis) protein is Small ribosomal subunit protein uS13.